The primary structure comprises 1522 residues: Lysine-specific demethylase 5B (1522 aa).

Positions 10–51 (CPVFEPSWEEFADPFAFIHKIRPIAEQTGICKVRPPPDWQPP) constitute a JmjN domain. In terms of domain architecture, ARID spans 75–165 (TRVKLNFLDQ…ILYPYNLFQS (91 aa)). The segment covering 180 to 192 (DTKDKEYKPHDIP) has biased composition (basic and acidic residues). The disordered stretch occupies residues 180–229 (DTKDKEYKPHDIPQRQSVQPSESCPPARRAKRLRAEATNIKTESDSPEVR). The PHD-type 1 zinc-finger motif lies at 284–334 (LYVCLLCGSGNDEDRLLLCDGCDDSYHTFCLIPPLHDVPKGDWRCPQCLAQ). Tyr400 contributes to the 2-oxoglutarate binding site. A JmjC domain is found at 428–594 (EYLDSGWNLN…LGRQCIEHYR (167 aa)). Fe cation is bound by residues His474 and Glu476. 2-oxoglutarate-binding residues include Ser482, Asn484, and Lys492. Residue His562 participates in Fe cation binding. The segment at 667-719 (CYKCKTTCFMSAVYCPCKPGLLVCLYHVEDLCSCPTYQYKLGYRYTLEELYPM) adopts a C5HC2 zinc-finger fold. The segment at 1151–1199 (LKVCVCQKEPAAPMIQCELCRGFFHTGCVSVPHALQGPRVWLCPQCRRS) adopts a PHD-type 2 zinc-finger fold. Over residues 1353-1365 (LQAEQKPSVGPSN) the composition is skewed to polar residues. Disordered regions lie at residues 1353 to 1373 (LQAE…CCRG) and 1400 to 1460 (ARVR…DSED). A compositionally biased stretch (basic residues) spans 1400–1416 (ARVRKMRTPKKKKLKLS). Basic and acidic residues predominate over residues 1426–1442 (RMERERERLLEAQRSSE). A PHD-type 3 zinc finger spans residues 1462-1516 (DAICPAVTCLQPEGEEVDWVQCDGSCNQWFHQVCVGISPEMAEKEDYICASCAGK).

It belongs to the JARID1 histone demethylase family. Fe(2+) serves as cofactor.

The protein resides in the nucleus. It catalyses the reaction N(6),N(6),N(6)-trimethyl-L-lysyl(4)-[histone H3] + 3 2-oxoglutarate + 3 O2 = L-lysyl(4)-[histone H3] + 3 formaldehyde + 3 succinate + 3 CO2. Functionally, histone demethylase that demethylates 'Lys-4' of histone H3, thereby playing a central role in histone code. Does not demethylate histone H3 'Lys-9' or H3 'Lys-27'. Demethylates trimethylated, dimethylated and monomethylated H3 'Lys-4'. Acts as a transcriptional corepressor. May repress the CLOCK-BMAL1 heterodimer-mediated transcriptional activation of the core clock component PER2. The chain is Lysine-specific demethylase 5B (KDM5B) from Gallus gallus (Chicken).